The following is a 359-amino-acid chain: Cyclic AMP response element-binding protein B (359 aa).

Disordered stretches follow at residues 1 to 73 and 185 to 238; these read MDNS…AQGG and VRNK…FTEI. Residues 9–32 show a composition bias toward low complexity; that stretch reads NGNSSAASGSNDVVDVVAQQAAAA. Residues 33 to 47 are compositionally biased toward gly residues; sequence VGGGGGGGGGGGGGN. Positions 48 to 70 are enriched in low complexity; it reads PQQQQQNPQSTTAGGPTGATNNA. In terms of domain architecture, KID spans 198–257; the sequence is KPEPNTQHPEDSDESLSDDDSQHHRSELTRRPSYNKIFTEISGPDMSGASLPMSDGVLNS. Serine 209, serine 212, and serine 214 each carry phosphoserine. A compositionally biased stretch (basic and acidic residues) spans 217–227; it reads DSQHHRSELTR. The bZIP domain occupies 300–359; the sequence is TRKREIRLQKNREAARECRRKKKEYIKCLENRVAVLENQNKALIEELKSLKELYCQTKND. The basic motif stretch occupies residues 301-326; sequence RKREIRLQKNREAARECRRKKKEYIK. The segment at 328–349 is leucine-zipper; sequence LENRVAVLENQNKALIEELKSL.

This sequence belongs to the bZIP family. ATF subfamily. In terms of assembly, homodimer. Most cells of the adult brain; cell bodies, but not neuropil.

Its subcellular location is the nucleus. Its function is as follows. Isoform E is a PKA-dependent transcriptional activator. Isoform J is a direct antagonist of activation by isoform E in cell culture. Binds the cAMP response element (CRE) (consensus: 5'-GTGACGT[AC][AG]-3'), a sequence present in many viral and cellular promoters. Has a role in long-term memory. This chain is Cyclic AMP response element-binding protein B, found in Drosophila melanogaster (Fruit fly).